The following is a 224-amino-acid chain: Glutathione S-transferase U8 (224 aa).

The 81-residue stretch at 5 to 85 (EHVKLLGLWG…YIEDTWKTTH (81 aa)) folds into the GST N-terminal domain. Residues 15–16 (SP), 42–43 (NR), 56–57 (KV), and 69–70 (ES) each bind glutathione. The GST C-terminal domain occupies 91–213 (DPYERAMARF…LPPKEKLVAV (123 aa)). At T152 the chain carries Phosphothreonine.

This sequence belongs to the GST superfamily. Tau family.

It is found in the cytoplasm. Its subcellular location is the cytosol. The catalysed reaction is RX + glutathione = an S-substituted glutathione + a halide anion + H(+). Functionally, may be involved in the conjugation of reduced glutathione to a wide number of exogenous and endogenous hydrophobic electrophiles and have a detoxification role against certain herbicides. The polypeptide is Glutathione S-transferase U8 (GSTU8) (Arabidopsis thaliana (Mouse-ear cress)).